Consider the following 298-residue polypeptide: tRNA dimethylallyltransferase 2 (298 aa).

19–26 (GATATGKT) is a binding site for ATP. Residue 21 to 26 (TATGKT) coordinates substrate. An interaction with substrate tRNA region spans residues 44 to 47 (DSRQ).

It belongs to the IPP transferase family. Monomer. Mg(2+) serves as cofactor.

It carries out the reaction adenosine(37) in tRNA + dimethylallyl diphosphate = N(6)-dimethylallyladenosine(37) in tRNA + diphosphate. Catalyzes the transfer of a dimethylallyl group onto the adenine at position 37 in tRNAs that read codons beginning with uridine, leading to the formation of N6-(dimethylallyl)adenosine (i(6)A). The chain is tRNA dimethylallyltransferase 2 from Treponema denticola (strain ATCC 35405 / DSM 14222 / CIP 103919 / JCM 8153 / KCTC 15104).